The primary structure comprises 182 residues: Phospholipase A2 inhibitor gamma subunit A2 (182 aa).

Intrachain disulfides connect Cys-3/Cys-27, Cys-6/Cys-13, Cys-20/Cys-48, Cys-54/Cys-75, Cys-76/Cys-81, Cys-99/Cys-124, Cys-117/Cys-146, and Cys-150/Cys-172. N-linked (GlcNAc...) asparagine glycosylation occurs at Asn-157.

It belongs to the CNF-like-inhibitor family. As to quaternary structure, heterodimer of subunit A and subunit B.

The protein localises to the secreted. Its function is as follows. Phospholipase A2 (PA2) inhibitor. Inhibits the enzymatic activity of PA2 of Deinagkistrodon acutus. Also shows a wide anti-hemorrhage activities to D.acutus, Naja atra and Agkistrodon halys venom. The native protein is more potent than the recombinant one. The chain is Phospholipase A2 inhibitor gamma subunit A2 from Trimerodytes annularis (Red-bellied annulate keelback).